We begin with the raw amino-acid sequence, 345 residues long: NADPH dehydrogenase (345 aa).

FMN is bound at residue 23–26; it reads SPMC. Tyr28 is a binding site for substrate. Positions 60 and 102 each coordinate FMN. 164-167 is a substrate binding site; sequence HGAH. Residues Arg215 and 307–308 each bind FMN; that span reads GR.

Belongs to the NADH:flavin oxidoreductase/NADH oxidase family. NamA subfamily. Homotetramer. FMN serves as cofactor.

The catalysed reaction is A + NADPH + H(+) = AH2 + NADP(+). Catalyzes the reduction of the double bond of an array of alpha,beta-unsaturated aldehydes and ketones. It also reduces the nitro group of nitroester and nitroaromatic compounds. It could have a role in detoxification processes. In Bacillus cereus (strain G9842), this protein is NADPH dehydrogenase.